Consider the following 147-residue polypeptide: MRLIKLHHLRPAPGSRRARIRVGRGEGSKGKTAGRGTKGTKARAPVRPGFAGGQIPLHMSIPKLKGFKNHKKVEYSVISIKRLCEAYPSGGVVTRDNVMSVIGKKRGFVKLLSDGEVTVKFDITVDKASAAAVEKITSAAGTVTQAR.

A disordered region spans residues 21–49 (RVGRGEGSKGKTAGRGTKGTKARAPVRPG).

Belongs to the universal ribosomal protein uL15 family. Part of the 50S ribosomal subunit.

Functionally, binds to the 23S rRNA. This chain is Large ribosomal subunit protein uL15, found in Tropheryma whipplei (strain TW08/27) (Whipple's bacillus).